Consider the following 583-residue polypeptide: Exonuclease 3'-5' domain-containing protein 2 (583 aa).

At 1–11 (MTRESAVATKR) the chain is on the mitochondrial intermembrane side. Residues 12–29 (NWAILAAGVGLVYVLVRH) traverse the membrane as a helical segment. Residues 30–583 (RHRLLCPLRR…AGLDAKIKET (554 aa)) are Cytoplasmic-facing. Positions 62 to 228 (TTQWVLNELK…AIYQKLCRDL (167 aa)) constitute a 3'-5' exonuclease domain. A divalent metal cation contacts are provided by Asp83, Glu85, and Asp213. The segment covering 266–281 (GSGVTRSKGSTQSKSN) has biased composition (polar residues). Positions 266–286 (GSGVTRSKGSTQSKSNKWVPK) are disordered.

Belongs to the EXD2 family. In terms of assembly, homodimer. Requires Mg(2+) as cofactor. Mn(2+) serves as cofactor.

Its subcellular location is the mitochondrion membrane. Functionally, 3'-5' exoribonuclease required for mitochondrial metabolism. This chain is Exonuclease 3'-5' domain-containing protein 2, found in Drosophila melanogaster (Fruit fly).